A 140-amino-acid polypeptide reads, in one-letter code: MAVQYETKATNVGGRKGHVHTDDNAINVDVLPPQQADGKATNPEQLFAAGYASCFNGAFDLILKQNKVRDAEPEVTLTVRLEDDPDAESPKLSVDIHAKVKNVLSQEDAEKYLQDAHDFCPYSKATRGNIDVNLNVEVVE.

It belongs to the OsmC/Ohr family.

This Staphylococcus epidermidis (strain ATCC 35984 / DSM 28319 / BCRC 17069 / CCUG 31568 / BM 3577 / RP62A) protein is Organic hydroperoxide resistance protein-like 1.